Here is a 350-residue protein sequence, read N- to C-terminus: LIM domain-containing protein unc-95 (350 aa).

Residues 1-37 (MTISPQPSHQQFESYQWTTESRSSQQRHGTGTPSQDG) are compositionally biased toward polar residues. Residues 1 to 65 (MTISPQPSHQ…ESRNSNKDKV (65 aa)) are disordered. Positions 45–65 (PVERHVARWRSESRNSNKDKV) are enriched in basic and acidic residues. A coiled-coil region spans residues 83–110 (LTALKNDVEQTTEIIRRKQEQMRMERRQ). 3 disordered regions span residues 177-198 (RRGQRGRDGEDGNKKKKEEIEY), 206-225 (PEEQIPQRPKIPEDDNMETD), and 235-262 (MSEETDSLRRRRARSTTPRRTLHISGSP). One can recognise an LIM zinc-binding domain in the interval 268 to 334 (AVCAYCSEEI…HDCFYKLYNG (67 aa)).

Post-translationally, ubiquitinated. Ubiquitination by rnf-5 leads to dissociation from muscle dense bodies during molting and is required for ecdysis. Expressed in the body wall muscles, vulval muscles and the anal muscles. Expressed in the muscle arms of the head muscle cells that form neuromuscular junctions and in the anal depressor muscle.

Its subcellular location is the cytoplasm. The protein localises to the nucleus. The protein resides in the cell membrane. It localises to the myofibril. It is found in the sarcomere. Its subcellular location is the m line. The protein localises to the cell junction. The protein resides in the focal adhesion. Required for the assembly and integrity of muscle dense bodies, which establish the adhesion sites of the muscle cells to the extracellular matrix. Decreased localization of unc-95 to dense bodies and their subsequent dissociation plays an important role in ecdysis during molting. Involved in the organization of the muscle sarcomeric structure and thereby required for locomotion. In Caenorhabditis elegans, this protein is LIM domain-containing protein unc-95.